A 1410-amino-acid polypeptide reads, in one-letter code: Ribosome-binding protein 1 (1410 aa).

Over 1 to 7 (MDIYDTQ) the chain is Lumenal. Residues 8-28 (TLGVVVFGGFMVVSAIGIFLV) form a helical membrane-spanning segment. The Cytoplasmic portion of the chain corresponds to 29-1410 (STFSMKETSY…GSSSKEGTSV (1382 aa)). Disordered regions lie at residues 44–90 (NQRK…DPAP) and 129–152 (QEKL…VEPA). The span at 52–63 (THHQKVEKKKKE) shows a compositional bias: basic residues. Basic and acidic residues predominate over residues 64 to 88 (KTVEKKGKTKKKEEKPNGKIPDHDP). A Glycyl lysine isopeptide (Lys-Gly) (interchain with G-Cter in SUMO2) cross-link involves residue Lys-148. Ser-159 and Ser-165 each carry phosphoserine. Disordered stretches follow at residues 173 to 648 (APKE…PLYL) and 895 to 925 (QSSH…LQSS). Composition is skewed to polar residues over residues 191 to 209 (TPAT…QNQS) and 225 to 238 (TPNQ…TPNQ). 33 repeat units span residues 197 to 206 (TQGKKAEGTQ), 207 to 216 (NQSKKAEGAP), 217 to 226 (NQGRKAEGTP), 227 to 236 (NQGKKTEGTP), 237 to 246 (NQGKKAEGTP), 247 to 256 (NQGKKAEGTP), 257 to 266 (NQGKKAEGAQ), 267 to 276 (NQGKKVDTTP), 277 to 286 (NQGKKVEGAP), 287 to 296 (TQGRKAEGAQ), 297 to 306 (NQAKKVEGAQ), 307 to 316 (NQGKKAEGAQ), 317 to 326 (NQGKKGEGAQ), 327 to 336 (NQGKKAEGAQ), 337 to 346 (NQGKKAEGAQ), 347 to 356 (NQGKKAEGAQ), 357 to 366 (NQGKKAEGAQ), 367 to 376 (NQGKKAEGAQ), 377 to 386 (NQGKKAEGAQ), 387 to 396 (NQGKKVEGAQ), 397 to 406 (NQGKKAEGAQ), 407 to 416 (NQGKKAEGAQ), 417 to 426 (NQGKKAEGAQ), 427 to 436 (NQGKKAEGAQ), 437 to 446 (NQGKKAEGAQ), 447 to 456 (NQGKKAEGAQ), 457 to 466 (NQGKKAEGAQ), 467 to 476 (NQGKKVEGAQ), 477 to 486 (NQGKKAEGAQ), 487 to 496 (NQGKKAEGAQ), 497 to 506 (NQGKKAEGAQ), 507 to 516 (NQGQKGEGAQ), and 517 to 526 (NQGKKTEGAQ). The 41 X 10 AA approximate tandem repeats of [TN]-Q-[GSA]-[KRQT]-K-[ATGSV]-[ED]-[GTAS]-[ATIS]-[PQTAS] stretch occupies residues 197-604 (TQGKKAEGTQ…NQGKKTESAS (408 aa)). Thr-225, Thr-235, Thr-245, and Thr-255 each carry phosphothreonine. 2 stretches are compositionally biased toward polar residues: residues 265–278 (AQNQ…TPNQ) and 295–519 (AQNQ…QNQG). The span at 520-532 (KKTEGAQGKKAER) shows a compositional bias: basic and acidic residues. Residues 527–534 (GKKAERSP) form a 34; approximate repeat. Ser-533 bears the Phosphoserine mark. Copy 35 of the repeat occupies 535–544 (NQGKKGEGAP). The stretch at 545-554 (IQGKKADSVA) is one 36; approximate repeat. The segment covering 553–567 (VANQGTKVEGITNQG) has biased composition (polar residues). Tandem repeats lie at residues 555 to 564 (NQGTKVEGIT) and 565 to 574 (NQGKKAEGSP). Residues 568–581 (KKAEGSPSEGKKAE) show a composition bias toward basic and acidic residues. Phosphoserine occurs at positions 573 and 583. The 39; approximate repeat unit spans residues 575–584 (SEGKKAEGSP). Tandem repeats lie at residues 585-594 (NQGKKADAAA) and 595-604 (NQGKKTESAS). Residues 602-612 (SASVQGRNTDV) show a composition bias toward polar residues. Ser-615 carries the post-translational modification Phosphoserine. Residue Lys-620 forms a Glycyl lysine isopeptide (Lys-Gly) (interchain with G-Cter in SUMO1) linkage. Position 900 is a phosphoserine (Ser-900). An N6-acetyllysine modification is found at Lys-932. Residues Ser-959 and Ser-978 each carry the phosphoserine modification. 4 disordered regions span residues 1093 to 1122 (GPTL…ETQS), 1260 to 1287 (EMKS…EQDP), 1330 to 1362 (EKLR…LTSD), and 1378 to 1410 (QEQL…GTSV). Ser-1276 and Ser-1277 each carry phosphoserine. Basic and acidic residues-rich tracts occupy residues 1347 to 1360 (SQLK…KKLT) and 1381 to 1403 (LARE…DGSS).

It localises to the endoplasmic reticulum membrane. Its function is as follows. Acts as a ribosome receptor and mediates interaction between the ribosome and the endoplasmic reticulum membrane. This Homo sapiens (Human) protein is Ribosome-binding protein 1 (RRBP1).